The chain runs to 628 residues: MSDKSDLKAELERKKQRLAQIREEKKRKEEERKKKEADMQQKKEPVQDDSDLDRKRRETEALLQSIGISPEPPLVPTPMSPSSKSVSTPSDAGSQDSGDLGPLTRTLQWDTDPSVLQLQSDSELGRRLHKLGVSKVTQVDFLPREVVSYSKETQTPLATHQSEEDEEDEEMVEPKIGHDSELENQEKKQETKEAPPRELTEEEKQQILHSEEFLIFFDRTIRVIERALAEDSDIFFDYSGRELEEKDGDVQAGANLSFNRQFYDEHWSKHRVVTCMDWSLQYPELMVASYSNNEDAPHEPDGVALVWNMKFKKTTPEYVFHCQSSVMSVCFARFHPNLVVGGTYSGQIVLWDNRSHRRTPVQRTPLSAAAHTHPVYCVNVVGTQNAHNLITVSTDGKMCSWSLDMLSTPQESMELVYNKSKPVAVTGMAFPTGDVNNFVVGSEEGTVYTACRHGSKAGIGEVFEGHQGPVTGINCHMAVGPIDFSHLFVTSSFDWTVKLWTTKHNKPLYSFEDNADYVYDVMWSPVHPALFACVDGMGRLDLWNLNSDTEVPTASVAIEGASALNRVRWAQGGKEVAVGDSEGRIWIYDVGELAVPHNDEWTRFARTLVEIRANRADSEEEGAVELAA.

Basic and acidic residues-rich tracts occupy residues 1-13 (MSDKSDLKAELER) and 20-60 (QIRE…RETE). The disordered stretch occupies residues 1–114 (MSDKSDLKAE…RTLQWDTDPS (114 aa)). At Ser2 the chain carries N-acetylserine. Position 50 is a phosphoserine (Ser50). The span at 70 to 79 (PEPPLVPTPM) shows a compositional bias: pro residues. Over residues 80–90 (SPSSKSVSTPS) the composition is skewed to low complexity. The residue at position 83 (Ser83) is a Phosphoserine. At Thr88 the chain carries Phosphothreonine. Phosphoserine is present on residues Ser90, Ser94, and Ser97. Polar residues predominate over residues 105–114 (RTLQWDTDPS). Residues 130-146 (KLGVSKVTQVDFLPREV) are interaction with DYNLT1. The disordered stretch occupies residues 152 to 204 (ETQTPLATHQSEEDEEDEEMVEPKIGHDSELENQEKKQETKEAPPRELTEEEK). Thr159 is modified (phosphothreonine). A phosphoserine mark is found at Ser162 and Ser180. Basic and acidic residues predominate over residues 172–204 (VEPKIGHDSELENQEKKQETKEAPPRELTEEEK). 7 WD repeats span residues 268–317 (SKHR…TTPE), 321–361 (HCQS…RTPV), 370–411 (AHTH…TPQE), 420–460 (SKPV…AGIG), 465–510 (GHQG…PLYS), 513–553 (DNAD…EVPT), and 559–598 (EGASALNRVRWAQGGKEVAVGDSEGRIWIYDVGELAVPHN). The residue at position 618 (Ser618) is a Phosphoserine.

The protein belongs to the dynein intermediate chain family. Homodimer. The cytoplasmic dynein 1 complex consists of two catalytic heavy chains (HCs) and a number of non-catalytic subunits presented by intermediate chains (ICs), light intermediate chains (LICs) and light chains (LCs); the composition seems to vary in respect to the IC, LIC and LC composition. The heavy chain homodimer serves as a scaffold for the probable homodimeric assembly of the respective non-catalytic subunits. The ICs and LICs bind directly to the HC dimer and the LCs assemble on the IC dimer. Interacts with DYNC1H1. Interacts with DYNLT1 and DYNLT3. Interacts with DCTN1. Interacts with DYNLL2. Interacts with MCRS1; the interaction is required for the proper distribution of centriolar satellites.

The protein resides in the cytoplasm. The protein localises to the chromosome. It is found in the centromere. Its subcellular location is the kinetochore. It localises to the cytoskeleton. The protein resides in the spindle pole. Functionally, acts as one of several non-catalytic accessory components of the cytoplasmic dynein 1 complex that are thought to be involved in linking dynein to cargos and to adapter proteins that regulate dynein function. Cytoplasmic dynein 1 acts as a motor for the intracellular retrograde motility of vesicles and organelles along microtubules. The intermediate chains mediate the binding of dynein to dynactin via its 150 kDa component (p150-glued) DCTN1. May play a role in mediating the interaction of cytoplasmic dynein with membranous organelles and kinetochores. This is Cytoplasmic dynein 1 intermediate chain 1 (Dync1i1) from Mus musculus (Mouse).